Consider the following 1041-residue polypeptide: Desmoglein-4 (1041 aa).

Residues 1–23 (MDWLLFRNICLLILFMVVLGVNS) form the signal peptide. The propeptide occupies 24 to 49 (EFIVEVKELDIENGTTTWQTVRRQKR). Cadherin domains are found at residues 50–157 (EWIK…PPVF), 158–269 (TQNV…FPIL), 270–385 (EKTS…GPTF), and 389–497 (SMTF…CPVI). Residues 50-634 (EWIKFAAACR…RQSNVGLGPA (585 aa)) are Extracellular-facing. A glycan (N-linked (GlcNAc...) asparagine) is linked at N110. A glycan (N-linked (GlcNAc...) asparagine) is linked at N545. A helical membrane pass occupies residues 635-655 (GIGMIILGLLLLLLSPLLLLM). Residues 656–1041 (CCCKRRQPEG…RYSNMHYSRQ (386 aa)) are Cytoplasmic-facing. 2 Desmoglein repeat repeats span residues 884-910 (TLSEAEFQAEMAAASEPMIHGDIIVTE) and 911-941 (TYTTSDPCVQPTTIVFDSQIPPNVVVTETVM). Positions 1014–1041 (ISQTTGSTSPMTSQHRVTRYSNMHYSRQ) are disordered.

Interacts with JUP. Strongly expressed in the skin; during the anagen stage of hair follicles in the matrix, precortex and inner rooth sheath.

The protein localises to the cell membrane. It localises to the cell junction. The protein resides in the desmosome. In terms of biological role, a component of desmosome cell-cell junctions which are required for positive regulation of cellular adhesion. Coordinates the transition from proliferation to differentiation in hair follicle keratinocytes. Plays a role in moderating lymphocyte migration to inflamed skin and maintaining homeostasis of the epidermal inflammatory response. The polypeptide is Desmoglein-4 (Dsg4) (Mus musculus (Mouse)).